We begin with the raw amino-acid sequence, 2006 residues long: Sodium channel protein type 2 subunit alpha (2006 aa).

Phosphoserine is present on Ser4. The interval 28–61 (RIAEEKAKRPKQERKDEDDENGPKPNSDLEAGKS) is disordered. Lys38 is covalently cross-linked (Glycyl lysine isopeptide (Lys-Gly) (interchain with G-Cter in SUMO1)). An I repeat occupies 111–456 (ILTPFNPIRK…QQMLEQLKKQ (346 aa)). The chain crosses the membrane as a helical span at residues 130–148 (LFNVLIMCTILTNCVFMTM). The helical transmembrane segment at 156 to 176 (KNVEYTFTGIYTFESLIKILA) threads the bilayer. A helical membrane pass occupies residues 191-208 (WNWLDFTVITFAYVTEFV). Residues 215–231 (ALRTFRVLRALKTISVI) traverse the membrane as a helical segment. A helical transmembrane segment spans residues 251-270 (VMILTVFCLSVFALIGLQLF). Residues Cys278 and Cys338 are joined by a disulfide bond. N-linked (GlcNAc...) asparagine glycans are attached at residues Asn285, Asn291, Asn297, Asn303, Asn308, and Asn340. The pore-forming intramembrane region spans 370 to 394 (FSWAFLSLFRLMTQDFWENLYQLTL). A helical transmembrane segment spans residues 402–422 (MIFFVLVIFLGSFYLINLILA). A phosphoserine mark is found at Ser468, Ser471, Ser484, Ser526, Ser528, Ser531, Ser553, Ser554, Ser558, Ser573, Ser576, Ser589, Ser610, Ser623, Ser687, Ser688, and Ser722. The interval 494–529 (SSKSEKELKNRRKKKKQKEQAGEEEKEDAVRKSASE) is disordered. A compositionally biased stretch (basic and acidic residues) spans 511–529 (KEQAGEEEKEDAVRKSASE). The tract at residues 589 to 635 (SENDFADDEHSTFEDNDSRRDSLFVPHRHGERRPSNVSQASRASRGI) is disordered. Residues 596–610 (DEHSTFEDNDSRRDS) show a composition bias toward basic and acidic residues. An II repeat occupies 742 to 1014 (CCKPWLKVKH…QIAVGRMQKG (273 aa)). The chain crosses the membrane as a helical span at residues 761 to 779 (FVDLAITICIVLNTLFMAM). Residues 791–810 (VLSVGNLVFTGIFTAEMFLK) traverse the membrane as a helical segment. Residues 825-844 (NIFDGFIVSLSLMELGLANV) traverse the membrane as a helical segment. The helical transmembrane segment at 847–864 (LSVLRSFRLLRVFKLAKS) threads the bilayer. The chain crosses the membrane as a helical span at residues 881-899 (ALGNLTLVLAIIVFIFAVV). Residues Cys913 and Cys919 are joined by a disulfide bond. The tract at residues 918 to 919 (DC) is binds SCN2B. The pore-forming intramembrane region spans 929–949 (FFHSFLIVFRVLCGEWIETMW). Residues Cys951 and Cys960 are joined by a disulfide bond. The helical transmembrane segment at 963 to 983 (VFMMVMVIGNLVVLNLFLALL) threads the bilayer. A disordered region spans residues 1121 to 1167 (EEFSSESDMEESKEKLNATSSSEGSTVDIGAPAEGEQPEAEPEESLE). Over residues 1156–1167 (EQPEAEPEESLE) the composition is skewed to acidic residues. One copy of the III repeat lies at 1191 to 1505 (KGKLWWNLRK…KKYYNAMKKL (315 aa)). The chain crosses the membrane as a helical span at residues 1211–1228 (FETFIVFMILLSSGALAF). The chain crosses the membrane as a helical span at residues 1242–1260 (MLEYADKVFTYIFILEMLL). The helical transmembrane segment at 1275-1293 (WCWLDFLIVDVSLVSLTAN) threads the bilayer. A helical transmembrane segment spans residues 1302-1320 (AIKSLRTLRALRPLRALSR). Residues 1338-1357 (IMNVLLVCLIFWLIFSIMGV) traverse the membrane as a helical segment. A disulfide bridge connects residues Cys1367 and Cys1387. An intramembrane region (pore-forming) is located at residues 1410–1431 (GLGYLSLLQVATFKGWMDIMYA). The helical transmembrane segment at 1449–1470 (YMYLYFVIFIIFGSFFTLNLFI) threads the bilayer. Residue Ser1507 is modified to Phosphoserine. The stretch at 1514 to 1812 (IPRPANKFQG…WEKFDPDATQ (299 aa)) is one IV repeat. A helical transmembrane segment spans residues 1534–1551 (FDISIMILICLNMVTMMV). Residues 1563–1581 (ILYWINLVFIVLFTGECVL) traverse the membrane as a helical segment. The helical transmembrane segment at 1594 to 1611 (GWNIFDFVVVILSIVGMF) threads the bilayer. Residues 1625-1641 (LFRVIRLARIGRILRLI) traverse the membrane as a helical segment. The chain crosses the membrane as a helical span at residues 1661 to 1678 (LFNIGLLLFLVMFIYAIF). Positions 1701 to 1723 (FGNSMICLFQITTSAGWDGLLAP) form an intramembrane region, pore-forming. An intrachain disulfide couples Cys1732 to Cys1747. Residues 1754 to 1776 (IFFFVSYIIISFLVVVNMYIAVI) traverse the membrane as a helical segment. The 30-residue stretch at 1906-1935 (EEVSAIVIQRAYRRYLLKQKVKKVSSIYKK) folds into the IQ domain. Ser1931 carries the post-translational modification Phosphoserine. The span at 1934–1965 (KKDKGKEDEGTPIKEDIITDKLNENSTPEKTD) shows a compositional bias: basic and acidic residues. Positions 1934 to 2006 (KKDKGKEDEG…KGKDIRESKK (73 aa)) are disordered. 3 positions are modified to phosphothreonine: Thr1944, Thr1964, and Thr1967. A Phosphoserine modification is found at Ser1972. Basic and acidic residues predominate over residues 1980 to 2006 (TKPEKEKFEKDKSEKEDKGKDIRESKK).

Belongs to the sodium channel (TC 1.A.1.10) family. Nav1.2/SCN2A subfamily. As to quaternary structure, heterooligomer of a large alpha subunit and a smaller beta subunit. Heterooligomer with SCN2B or SCN4B; disulfide-linked. Interacts with NEDD4L. Interacts with CALM. Interacts with TMEM233. Post-translationally, sumoylated at Lys-38. Sumoylation is induced by hypoxia, increases voltage-gated sodium current and mediates the early response to acute hypoxia in neurons. Sumoylated SCN2A is located at the cell membrane. Expressed in brain (at protein level). Detected in hippocampus, cortex and brain stem.

The protein localises to the cell membrane. The enzyme catalyses Na(+)(in) = Na(+)(out). Functionally, mediates the voltage-dependent sodium ion permeability of excitable membranes. Assuming opened or closed conformations in response to the voltage difference across the membrane, the protein forms a sodium-selective channel through which Na(+) ions may pass in accordance with their electrochemical gradient. Implicated in the regulation of hippocampal replay occurring within sharp wave ripples (SPW-R) important for memory. The protein is Sodium channel protein type 2 subunit alpha of Mus musculus (Mouse).